The sequence spans 337 residues: Transaldolase (337 aa).

A Nuclear localization signal motif is present at residues Met-1 to Arg-10. An N6-acetyllysine modification is found at Lys-115. The active-site Schiff-base intermediate with substrate is the Lys-142. Lys-219 bears the N6-acetyllysine mark. Ser-237 and Ser-256 each carry phosphoserine. An N6-acetyllysine mark is found at Lys-269, Lys-286, and Lys-321.

Belongs to the transaldolase family. Type 1 subfamily. Homodimer. Interacts with KPNA1 and KPNA4.

It is found in the nucleus. It localises to the cytoplasm. It catalyses the reaction D-sedoheptulose 7-phosphate + D-glyceraldehyde 3-phosphate = D-erythrose 4-phosphate + beta-D-fructose 6-phosphate. It participates in carbohydrate degradation; pentose phosphate pathway; D-glyceraldehyde 3-phosphate and beta-D-fructose 6-phosphate from D-ribose 5-phosphate and D-xylulose 5-phosphate (non-oxidative stage): step 2/3. Catalyzes the rate-limiting step of the non-oxidative phase in the pentose phosphate pathway. Catalyzes the reversible conversion of sedheptulose-7-phosphate and D-glyceraldehyde 3-phosphate into erythrose-4-phosphate and beta-D-fructose 6-phosphate. The sequence is that of Transaldolase (Taldo1) from Rattus norvegicus (Rat).